A 396-amino-acid chain; its full sequence is Purine ribonucleoside efflux pump NepI (396 aa).

At 1–21 the chain is on the cytoplasmic side; sequence MSEFIAENRGADAITRPNWSA. A helical membrane pass occupies residues 22 to 42; it reads VFSVAFCVACLIIVEFLPVSL. Residues 43-54 are Periplasmic-facing; that stretch reads LTPMAQDLGISE. Residues 55–75 form a helical membrane-spanning segment; sequence GVAGQSVTVTAFVAMFASLFI. Residues 76–85 are Cytoplasmic-facing; that stretch reads TQTIQATDRR. A helical membrane pass occupies residues 86–106; that stretch reads YVVILFAVLLTLSCLLVSFAN. S107 is a topological domain (periplasmic). The chain crosses the membrane as a helical span at residues 108–128; the sequence is FSLLLIGRACLGLALGGFWAM. Over 129 to 147 the chain is Cytoplasmic; that stretch reads SASLTMRLVPPRTVPKALS. The helical transmembrane segment at 148-168 threads the bilayer; that stretch reads VIFGAVSIALVIAAPLGSFLG. Topologically, residues 169–175 are periplasmic; the sequence is ELIGWRN. A helical transmembrane segment spans residues 176–196; that stretch reads VFNAAAVMGVLCIFWIIKSLP. Residues 197 to 215 are Cytoplasmic-facing; it reads SLPGEPSHQKQNTFRLLQR. Residues 216–236 form a helical membrane-spanning segment; it reads PGVMAGMIAIFMSFAGQFAFF. Over 237–255 the chain is Periplasmic; sequence TYIRPVYMNLAGFGVDGLT. A helical membrane pass occupies residues 256 to 276; it reads LVLLSFGIASFIGTSLSSFIL. The Cytoplasmic portion of the chain corresponds to 277–281; it reads KRSVK. The chain crosses the membrane as a helical span at residues 282–302; it reads LALAGAPLILAVSALVLTLWG. Residues 303-305 lie on the Periplasmic side of the membrane; sequence SDK. Residues 306 to 326 traverse the membrane as a helical segment; it reads IVATGVAIIWGLTFALVPVGW. Over 327–343 the chain is Cytoplasmic; sequence STWITRSLADQAEKAGS. A helical transmembrane segment spans residues 344–364; the sequence is IQVAVIQLANTCGAAIGGYAL. Residues 365–366 lie on the Periplasmic side of the membrane; that stretch reads DN. Residues 367–387 form a helical membrane-spanning segment; sequence IGLTSPLMLSGTLMLLTALLV. The Cytoplasmic portion of the chain corresponds to 388–396; sequence TAKVKMKKS.

The protein belongs to the major facilitator superfamily. DHA1 family. NepI (TC 2.A.1.2.26) subfamily.

It is found in the cell inner membrane. It catalyses the reaction inosine(in) + H(+)(out) = inosine(out) + H(+)(in). The enzyme catalyses guanosine(in) + H(+)(out) = guanosine(out) + H(+)(in). Functionally, involved in the efflux of purine ribonucleosides, such as inosine and guanosine. In Shigella flexneri, this protein is Purine ribonucleoside efflux pump NepI.